A 666-amino-acid chain; its full sequence is Hybrid PKS-NRPS synthetase pytA (666 aa).

The Ketosynthase family 3 (KS3) domain maps to 1–340; the sequence is MDPQQRLLLE…GTNAHAILEE (340 aa). Active-site for beta-ketoacyl synthase activity residues include cysteine 87, histidine 222, and histidine 260. Residues 455 to 665 form a malonyl-CoA:ACP transacylase (MAT) domain region; the sequence is VFTGQGAQWF…VFVHSLVIKR (211 aa). Catalysis depends on serine 548, which acts as the For malonyltransferase activity.

This sequence in the C-terminal section; belongs to the NRP synthetase family.

The protein operates within secondary metabolite biosynthesis. Its function is as follows. Hybrid PKS-NRPS synthetase; part of the gene cluster that mediates the biosynthesis of pyranterreones, a family of antioxidative compounds. The first step of pyranonigrins biosynthesis is performed by the hybrid PKS-NRPS synthetase pytA that condenses 4 malonyl-CoA units ato the acetyl starter unit by the modular PKS of pytA. The acyl chain is then connected to an L-serine through the amide bond by the modular NRPS of pytA. A tetramic acid is formed and released from the PKS-NRPS pytA to give pyranterreone 5 with the help of the thioesterase pytI. Pyranterreone 5 could be methylated by pytC to afford pyranterreone 6. Both pyranterreones 5 and 6 are subsequently oxidized by the FAD-linked oxidoreductase pytB and the cytochrome P450 monooxygenase pytD to form the fused gamma-pyrone core, resulting in pyranterreones 7 and 11, respectively. The hydroxy group at C-8 of pyranterreones 7 and 11 are dehydrated by the aspartyl protease pytH to form a delta-7 double bond to give pyranterreones 3 and 1, 2 accordingly. The exo-methylene of pyranterreone 3 could be reduced into a pendant methyl by reductase pytE to provide pyranterreone 4, also known as cordylactam. Pyranterreone 4 can be reconverted to pyranterreone 3 through pytB-catalyzed dehydrogenation or further oxidized to pyranterreones 9 and 10. This is Hybrid PKS-NRPS synthetase pytA from Aspergillus terreus (strain NIH 2624 / FGSC A1156).